A 928-amino-acid chain; its full sequence is MORC family CW-type zinc finger protein 4 (928 aa).

Residues 417 to 469 (RIPDQTWVQCDECLKWRRLPGMVDPSTLPARWFCYYNPHPKFKRCSVPEEQER) form a CW-type zinc finger. Zn(2+) contacts are provided by Cys426, Cys429, Cys450, and Cys461. Disordered regions lie at residues 474-510 (LHRS…TPPL), 527-546 (NSPS…PRLK), 599-649 (AYPE…DQDQ), and 718-766 (RAES…LKRT). The span at 485 to 497 (AAEKKQKPMESDK) shows a compositional bias: basic and acidic residues. 3 stretches are compositionally biased toward basic and acidic residues: residues 626-636 (ESNKHTEENRE), 739-748 (KGKDCQDSRS), and 756-766 (TPKESEELKRT). Residues 758-867 (KESEELKRTT…LEVLQKAQVS (110 aa)) adopt a coiled-coil conformation.

It localises to the nucleus. Functionally, histone methylation reader which binds to non-methylated (H3K4me0), monomethylated (H3K4me1), dimethylated (H3K4me2) and trimethylated (H3K4me3) 'Lys-4' on histone H3. The order of binding preference is H3K4me3 &gt; H3K4me2 &gt; H3K4me1 &gt; H3K4me0. The polypeptide is MORC family CW-type zinc finger protein 4 (Morc4) (Mus musculus (Mouse)).